A 198-amino-acid polypeptide reads, in one-letter code: Recombination protein RecR (198 aa).

The C4-type zinc finger occupies 57–72 (CTVCGHITDTDPCYIC). Residues 80–175 (TTICVVQDPK…KVTRIAHGLP (96 aa)) form the Toprim domain.

It belongs to the RecR family.

Its function is as follows. May play a role in DNA repair. It seems to be involved in an RecBC-independent recombinational process of DNA repair. It may act with RecF and RecO. This Geobacillus sp. (strain WCH70) protein is Recombination protein RecR.